A 354-amino-acid polypeptide reads, in one-letter code: Uroporphyrinogen decarboxylase (354 aa).

Substrate contacts are provided by residues 27–31, F46, D77, Y153, T208, and H326; that span reads RQAGR.

This sequence belongs to the uroporphyrinogen decarboxylase family. In terms of assembly, homodimer.

The protein resides in the cytoplasm. The catalysed reaction is uroporphyrinogen III + 4 H(+) = coproporphyrinogen III + 4 CO2. Its pathway is porphyrin-containing compound metabolism; protoporphyrin-IX biosynthesis; coproporphyrinogen-III from 5-aminolevulinate: step 4/4. Its function is as follows. Catalyzes the decarboxylation of four acetate groups of uroporphyrinogen-III to yield coproporphyrinogen-III. This chain is Uroporphyrinogen decarboxylase, found in Neisseria meningitidis serogroup B (strain ATCC BAA-335 / MC58).